A 420-amino-acid polypeptide reads, in one-letter code: UDP-N-acetylglucosamine 1-carboxyvinyltransferase (420 aa).

22-23 (KN) provides a ligand contact to phosphoenolpyruvate. Residue Arg-93 participates in UDP-N-acetyl-alpha-D-glucosamine binding. The active-site Proton donor is Cys-117. At Cys-117 the chain carries 2-(S-cysteinyl)pyruvic acid O-phosphothioketal. UDP-N-acetyl-alpha-D-glucosamine is bound by residues Asp-307 and Ile-329.

This sequence belongs to the EPSP synthase family. MurA subfamily.

The protein resides in the cytoplasm. The catalysed reaction is phosphoenolpyruvate + UDP-N-acetyl-alpha-D-glucosamine = UDP-N-acetyl-3-O-(1-carboxyvinyl)-alpha-D-glucosamine + phosphate. It participates in cell wall biogenesis; peptidoglycan biosynthesis. Its function is as follows. Cell wall formation. Adds enolpyruvyl to UDP-N-acetylglucosamine. The protein is UDP-N-acetylglucosamine 1-carboxyvinyltransferase of Cellvibrio japonicus (strain Ueda107) (Pseudomonas fluorescens subsp. cellulosa).